A 71-amino-acid polypeptide reads, in one-letter code: Small ribosomal subunit protein eS17 (71 aa).

This sequence belongs to the eukaryotic ribosomal protein eS17 family.

In Pyrobaculum neutrophilum (strain DSM 2338 / JCM 9278 / NBRC 100436 / V24Sta) (Thermoproteus neutrophilus), this protein is Small ribosomal subunit protein eS17.